Reading from the N-terminus, the 302-residue chain is Light-independent protochlorophyllide reductase iron-sulfur ATP-binding protein (302 aa).

Over residues 1–10 (MSTATISPSQ) the composition is skewed to polar residues. The disordered stretch occupies residues 1–21 (MSTATISPSQIGRGARPDGEG). ATP is bound by residues 46 to 51 (GIGKST) and lysine 75. Serine 50 contacts Mg(2+). [4Fe-4S] cluster-binding residues include cysteine 131 and cysteine 165. Residues 216–217 (NR) and 240–242 (PAL) contribute to the ATP site.

It belongs to the NifH/BchL/ChlL family. As to quaternary structure, homodimer. Protochlorophyllide reductase is composed of three subunits; BchL, BchN and BchB. [4Fe-4S] cluster serves as cofactor.

It carries out the reaction chlorophyllide a + oxidized 2[4Fe-4S]-[ferredoxin] + 2 ADP + 2 phosphate = protochlorophyllide a + reduced 2[4Fe-4S]-[ferredoxin] + 2 ATP + 2 H2O. The protein operates within porphyrin-containing compound metabolism; bacteriochlorophyll biosynthesis (light-independent). Functionally, component of the dark-operative protochlorophyllide reductase (DPOR) that uses Mg-ATP and reduced ferredoxin to reduce ring D of protochlorophyllide (Pchlide) to form chlorophyllide a (Chlide). This reaction is light-independent. The L component serves as a unique electron donor to the NB-component of the complex, and binds Mg-ATP. This is Light-independent protochlorophyllide reductase iron-sulfur ATP-binding protein from Rubrivivax gelatinosus (strain NBRC 100245 / IL144).